The following is a 482-amino-acid chain: Bifunctional protein GlmU (482 aa).

The pyrophosphorylase stretch occupies residues 1–241 (MTASTEAAVV…SALVTGVNDR (241 aa)). UDP-N-acetyl-alpha-D-glucosamine contacts are provided by residues 12–15 (LAAG), lysine 26, glutamine 83, 88–89 (GT), 112–114 (SGD), glycine 151, glutamate 166, asparagine 181, and asparagine 239. Aspartate 114 is a Mg(2+) binding site. Asparagine 239 serves as a coordination point for Mg(2+). Residues 242–262 (VQLSDLGKVLNRRIVAAHQRA) are linker. Residues 263-482 (GVTIIDPGST…AARKALGDES (220 aa)) form an N-acetyltransferase region. UDP-N-acetyl-alpha-D-glucosamine contacts are provided by arginine 344 and lysine 362. Histidine 374 acts as the Proton acceptor in catalysis. The UDP-N-acetyl-alpha-D-glucosamine site is built by tyrosine 377 and asparagine 388. Residues alanine 391, 397–398 (NY), serine 416, and alanine 434 each bind acetyl-CoA. Positions 463–482 (KKRPGSAADKAARKALGDES) are disordered. Residues 472-482 (KAARKALGDES) show a composition bias toward basic and acidic residues.

The protein in the N-terminal section; belongs to the N-acetylglucosamine-1-phosphate uridyltransferase family. In the C-terminal section; belongs to the transferase hexapeptide repeat family. As to quaternary structure, homotrimer. Mg(2+) is required as a cofactor.

It is found in the cytoplasm. The enzyme catalyses alpha-D-glucosamine 1-phosphate + acetyl-CoA = N-acetyl-alpha-D-glucosamine 1-phosphate + CoA + H(+). It carries out the reaction N-acetyl-alpha-D-glucosamine 1-phosphate + UTP + H(+) = UDP-N-acetyl-alpha-D-glucosamine + diphosphate. The protein operates within nucleotide-sugar biosynthesis; UDP-N-acetyl-alpha-D-glucosamine biosynthesis; N-acetyl-alpha-D-glucosamine 1-phosphate from alpha-D-glucosamine 6-phosphate (route II): step 2/2. It functions in the pathway nucleotide-sugar biosynthesis; UDP-N-acetyl-alpha-D-glucosamine biosynthesis; UDP-N-acetyl-alpha-D-glucosamine from N-acetyl-alpha-D-glucosamine 1-phosphate: step 1/1. Its pathway is bacterial outer membrane biogenesis; LPS lipid A biosynthesis. Its function is as follows. Catalyzes the last two sequential reactions in the de novo biosynthetic pathway for UDP-N-acetylglucosamine (UDP-GlcNAc). The C-terminal domain catalyzes the transfer of acetyl group from acetyl coenzyme A to glucosamine-1-phosphate (GlcN-1-P) to produce N-acetylglucosamine-1-phosphate (GlcNAc-1-P), which is converted into UDP-GlcNAc by the transfer of uridine 5-monophosphate (from uridine 5-triphosphate), a reaction catalyzed by the N-terminal domain. This Mycolicibacterium smegmatis (strain ATCC 700084 / mc(2)155) (Mycobacterium smegmatis) protein is Bifunctional protein GlmU.